Consider the following 695-residue polypeptide: Protein MALE DISCOVERER 1 (695 aa).

A signal peptide spans 1–29 (MGCRWNPIGFQFSCFMFLIITLQSRSSLS). Over 30–340 (LESEGFVLLK…SKGFKDVWLY (311 aa)) the chain is Extracellular. 2 N-linked (GlcNAc...) asparagine glycosylation sites follow: N56 and N80. LRR repeat units lie at residues 75–98 (KVQMLNLSGCSLGGTLAPELSQLS), 99–121 (ELRSLILSKNKLSGDIPNEFASF), 123–144 (KLEFLDLRDNNLNGVVPPELNK), and 147–168 (TPENLLLSGNKFAGFMTVKFLR). Residue N247 is glycosylated (N-linked (GlcNAc...) asparagine). The interval 302–325 (PPLIPPSSPPPLPTNNTIASDPPR) is disordered. A compositionally biased stretch (pro residues) spans 303-314 (PLIPPSSPPPLP). N316 carries an N-linked (GlcNAc...) asparagine glycan. The chain crosses the membrane as a helical span at residues 341–361 (VVIGVAAFVAMLIIVAVIFFF). The Cytoplasmic segment spans residues 362–695 (RKRAVKSIGP…ELEILSSEAT (334 aa)). One can recognise a Protein kinase domain in the interval 363–668 (KRAVKSIGPW…YVVQQLKEVI (306 aa)). S652 is subject to Phosphoserine.

This sequence belongs to the protein kinase superfamily. Ser/Thr protein kinase family. Homodimer. Interacts with MIK1, MIK2 and LURE1.2. LURE1.2 enhances the heterodimerization of MDIS1 with MIK1 or MIK2. Phosphorylated by MIK1. As to expression, expressed in pollen tubes and seedlings.

It is found in the cell membrane. It localises to the endomembrane system. It catalyses the reaction L-seryl-[protein] + ATP = O-phospho-L-seryl-[protein] + ADP + H(+). The enzyme catalyses L-threonyl-[protein] + ATP = O-phospho-L-threonyl-[protein] + ADP + H(+). In terms of biological role, involved in the pollen tube perception of the female signal. This Arabidopsis thaliana (Mouse-ear cress) protein is Protein MALE DISCOVERER 1.